A 576-amino-acid polypeptide reads, in one-letter code: MGKNSKAIGNNHVKSVYQALLQSLKSKSVNGFSKITIETISFIKNLYPEIDSVTSKFDNSRPDQSKDLTLYLKSGETISLNLFLIKKGRRIQPKNAGAKSFLEKYFLSAEMQKIFNKEFERYYLDYLKEVVEHKKGTHYITDKRELKRLVSSHFPKFTEEINLYRDKFLFNLRETCFTLLQQFYNEKNIGFTHAFNVFFMVNDTNIITSYGKDENDVKVEKFAPASPSLKDIELYKTGKSTVGIKFGEVGLTLRFKFESDPWKSIKLATGYHEFPKEKERVNVNLKTMRRMEKLLNKHEYAKTSNNSNAIGKCHEAWTYYYFLKAFPDVIQVDPKQCVELINTYFSSINQNTLKKLYSSTSTIVDAITEKLRQKYHDYIIESIELIPDAYIKDRLDTGDLQLVLKVNNNIIVENISLKALAKRNSKITTKNPGMGSILGPTYFNMGSMESVINEVKNKFTIGEFNHRKSLEILSYEFGMKLDSATQEQLRRGIHNLLGKAMIAITIYGEGISFCKEPSEIDGEVKVHVNVPSAIQNTLTWNNELESISLRAKFSKSQKHGWSSIKLTSECQLESRK.

In terms of assembly, monomer. It depends on Mg(2+) as a cofactor.

It carries out the reaction Endonucleolytic cleavage of DNA to give specific double-stranded fragments with terminal 5'-phosphates.. Functionally, a P subtype restriction enzyme that recognizes the double-stranded sequence 5'-GGCC-3' and cleaves after G-2. The sequence is that of Type II restriction enzyme BsuRI (hsdRR) from Bacillus subtilis.